Here is a 139-residue protein sequence, read N- to C-terminus: uncharacterized protein (139 aa).

A helical membrane pass occupies residues 43–59 (FGVISTLIAIFIGAFWL).

It localises to the membrane. This is an uncharacterized protein from Haemophilus influenzae (strain ATCC 51907 / DSM 11121 / KW20 / Rd).